Here is a 510-residue protein sequence, read N- to C-terminus: NAD(P)H-quinone oxidoreductase subunit 2 B, chloroplastic (510 aa).

Transmembrane regions (helical) follow at residues 24 to 44 (LLLF…GLIL), 57 to 77 (LPWF…ALLF), 99 to 119 (IFQF…VEYI), 124 to 144 (MAIT…MFLC), 149 to 169 (LITI…LSGY), 183 to 203 (YLLM…WLYG), 227 to 247 (PGIS…LSPA), 295 to 315 (WHLL…IIAI), 323 to 343 (MLAY…IVGD), 354 to 374 (YMLF…LFGL), 395 to 415 (ALSL…AGFF), 428 to 448 (GLYS…YYYL), and 484 to 504 (MIVC…IIAI).

It belongs to the complex I subunit 2 family. In terms of assembly, NDH is composed of at least 16 different subunits, 5 of which are encoded in the nucleus.

The protein resides in the plastid. The protein localises to the chloroplast thylakoid membrane. It carries out the reaction a plastoquinone + NADH + (n+1) H(+)(in) = a plastoquinol + NAD(+) + n H(+)(out). The catalysed reaction is a plastoquinone + NADPH + (n+1) H(+)(in) = a plastoquinol + NADP(+) + n H(+)(out). Functionally, NDH shuttles electrons from NAD(P)H:plastoquinone, via FMN and iron-sulfur (Fe-S) centers, to quinones in the photosynthetic chain and possibly in a chloroplast respiratory chain. The immediate electron acceptor for the enzyme in this species is believed to be plastoquinone. Couples the redox reaction to proton translocation, and thus conserves the redox energy in a proton gradient. The chain is NAD(P)H-quinone oxidoreductase subunit 2 B, chloroplastic from Jasminum nudiflorum (Winter jasmine).